We begin with the raw amino-acid sequence, 244 residues long: Cyclin-Q (244 aa).

The protein belongs to the cyclin family. Cyclin-like FAM58 subfamily.

In terms of biological role, may be an activating cyclin for the cyclin-associated kinase CDK10. The sequence is that of Cyclin-Q (ccnq) from Xenopus laevis (African clawed frog).